The chain runs to 355 residues: Elongation factor Ts (355 aa).

An involved in Mg(2+) ion dislocation from EF-Tu region spans residues 82–85 (TDFV).

The protein belongs to the EF-Ts family.

It localises to the cytoplasm. In terms of biological role, associates with the EF-Tu.GDP complex and induces the exchange of GDP to GTP. It remains bound to the aminoacyl-tRNA.EF-Tu.GTP complex up to the GTP hydrolysis stage on the ribosome. The chain is Elongation factor Ts from Helicobacter pylori (strain G27).